The chain runs to 199 residues: Recombination protein RecR (199 aa).

The segment at Cys57–Cys72 adopts a C4-type zinc-finger fold. Residues Ser80–Ala176 form the Toprim domain.

It belongs to the RecR family.

Functionally, may play a role in DNA repair. It seems to be involved in an RecBC-independent recombinational process of DNA repair. It may act with RecF and RecO. In Lactobacillus delbrueckii subsp. bulgaricus (strain ATCC BAA-365 / Lb-18), this protein is Recombination protein RecR.